A 989-amino-acid chain; its full sequence is Cation-chloride cotransporter 1 (989 aa).

Positions Met1–Ala10 are enriched in acidic residues. A disordered region spans residues Met1–Gly29. At Met1–Phe132 the chain is on the cytoplasmic side. The chain crosses the membrane as a helical span at residues Gly133–Ile153. Over Arg154–Ser167 the chain is Extracellular. A helical membrane pass occupies residues Leu168–Ile188. The Cytoplasmic portion of the chain corresponds to Ala189–Ser214. The helical transmembrane segment at Ile215–Val235 threads the bilayer. The Extracellular portion of the chain corresponds to Glu236–Gln280. Asn256 and Asn261 each carry an N-linked (GlcNAc...) asparagine glycan. Residues Val281–Ile301 traverse the membrane as a helical segment. Residues Asn302 to Val304 lie on the Cytoplasmic side of the membrane. The chain crosses the membrane as a helical span at residues Ala305–Ile325. The Extracellular portion of the chain corresponds to Ala326–Ser365. Asn363 carries an N-linked (GlcNAc...) asparagine glycan. The chain crosses the membrane as a helical span at residues Ile366–Ala386. The Cytoplasmic segment spans residues Gly387 to Thr405. The helical transmembrane segment at Leu406–Leu426 threads the bilayer. Residues Ala427 to Thr441 are Extracellular-facing. Residues Val442–Ala462 form a helical membrane-spanning segment. Residues Leu463 to Ser498 lie on the Cytoplasmic side of the membrane. Residues Ala499–Ile519 form a helical membrane-spanning segment. The Extracellular segment spans residues Thr520 to Thr522. Residues Ile523–Leu543 traverse the membrane as a helical segment. Residues Leu544–Pro551 are Cytoplasmic-facing. A helical transmembrane segment spans residues Arg552–Met572. Residues Phe573–Ser578 are Extracellular-facing. Residues Phe579–Lys599 form a helical membrane-spanning segment. The Cytoplasmic portion of the chain corresponds to Ala600–Thr989.

It belongs to the SLC12A transporter family. As to expression, expressed in roots, stems and leaves with higher expression in root and leaf tips.

It is found in the membrane. Probable cation/chloride cotransporter that may mediate potassium-chloride cotransport. Involved in plant development and K(+) and Cl(-) homeostasis. May not be involved in sodium-chloride cotransport. The sequence is that of Cation-chloride cotransporter 1 (CCC1) from Oryza sativa subsp. japonica (Rice).